The sequence spans 111 residues: Thioredoxin 2 (111 aa).

Positions 2–109 constitute a Thioredoxin domain; sequence SKGVITITDA…LLSFLDTHLN (108 aa). A disulfide bridge links C33 with C36.

This sequence belongs to the thioredoxin family.

Participates in various redox reactions through the reversible oxidation of its active center dithiol to a disulfide and catalyzes dithiol-disulfide exchange reactions. The sequence is that of Thioredoxin 2 (trxB) from Nostoc sp. (strain PCC 7120 / SAG 25.82 / UTEX 2576).